Consider the following 266-residue polypeptide: Esterase AGAP003155 (266 aa).

Active-site charge relay system residues include Ser114, Asp172, and His199. Positions 231-266 (ATEENSFHLEGQEEAEESALQPVHEGLQNGSDSDSD) are disordered.

This sequence belongs to the LovG family.

This chain is Esterase AGAP003155, found in Anopheles gambiae (African malaria mosquito).